A 363-amino-acid polypeptide reads, in one-letter code: Chorismate synthase (363 aa).

2 residues coordinate NADP(+): Arg-48 and Arg-54. FMN is bound by residues 125 to 127 (RSS), 237 to 238 (NA), Gly-277, 292 to 296 (KPTSS), and Arg-318.

It belongs to the chorismate synthase family. Homotetramer. FMNH2 serves as cofactor.

It catalyses the reaction 5-O-(1-carboxyvinyl)-3-phosphoshikimate = chorismate + phosphate. The protein operates within metabolic intermediate biosynthesis; chorismate biosynthesis; chorismate from D-erythrose 4-phosphate and phosphoenolpyruvate: step 7/7. Its function is as follows. Catalyzes the anti-1,4-elimination of the C-3 phosphate and the C-6 proR hydrogen from 5-enolpyruvylshikimate-3-phosphate (EPSP) to yield chorismate, which is the branch point compound that serves as the starting substrate for the three terminal pathways of aromatic amino acid biosynthesis. This reaction introduces a second double bond into the aromatic ring system. This is Chorismate synthase from Pseudomonas putida (strain ATCC 700007 / DSM 6899 / JCM 31910 / BCRC 17059 / LMG 24140 / F1).